The sequence spans 123 residues: Small ribosomal subunit protein bS16 (123 aa).

The tract at residues Val87 to Glu123 is disordered. Residues Arg99–Lys110 show a composition bias toward basic and acidic residues. Over residues Val111–Glu123 the composition is skewed to low complexity.

The protein belongs to the bacterial ribosomal protein bS16 family.

In Rhizobium johnstonii (strain DSM 114642 / LMG 32736 / 3841) (Rhizobium leguminosarum bv. viciae), this protein is Small ribosomal subunit protein bS16.